Here is a 256-residue protein sequence, read N- to C-terminus: MNDQRKGDHAEPTTHFGYQDVPESQKAKKVAEVFHSVAAKYDLMNDVLSGGMHRLWKRFTIELSGVRSGNRVLDIAGGTGDLAAKFSRLVGPTGQVVLADINDSMLKVGRDRLLDRGVAGNIEFVQADAEKLPFPDNHFDCVTIAFGLRNVTHKDEAIRSMLRVLKPGGRLLILEFSKPTNKLMSRAYDAYSFAFMPLAGKLITNDAESYRYLAESIRMHPDQETLKSMMVEAGFDRVTYHNMTSGIVAVHRGIKP.

Residues 1–12 (MNDQRKGDHAEP) are compositionally biased toward basic and acidic residues. The disordered stretch occupies residues 1 to 23 (MNDQRKGDHAEPTTHFGYQDVPE). Residues Thr-79, Asp-100, and 128–129 (DA) each bind S-adenosyl-L-methionine.

The protein belongs to the class I-like SAM-binding methyltransferase superfamily. MenG/UbiE family.

The enzyme catalyses a 2-demethylmenaquinol + S-adenosyl-L-methionine = a menaquinol + S-adenosyl-L-homocysteine + H(+). The catalysed reaction is a 2-methoxy-6-(all-trans-polyprenyl)benzene-1,4-diol + S-adenosyl-L-methionine = a 5-methoxy-2-methyl-3-(all-trans-polyprenyl)benzene-1,4-diol + S-adenosyl-L-homocysteine + H(+). It participates in quinol/quinone metabolism; menaquinone biosynthesis; menaquinol from 1,4-dihydroxy-2-naphthoate: step 2/2. It functions in the pathway cofactor biosynthesis; ubiquinone biosynthesis. Methyltransferase required for the conversion of demethylmenaquinol (DMKH2) to menaquinol (MKH2) and the conversion of 2-polyprenyl-6-methoxy-1,4-benzoquinol (DDMQH2) to 2-polyprenyl-3-methyl-6-methoxy-1,4-benzoquinol (DMQH2). The protein is Ubiquinone/menaquinone biosynthesis C-methyltransferase UbiE of Pseudomonas putida (strain GB-1).